Consider the following 333-residue polypeptide: Ribosomal RNA small subunit methyltransferase C (333 aa).

It belongs to the methyltransferase superfamily. RsmC family. In terms of assembly, monomer.

It is found in the cytoplasm. The enzyme catalyses guanosine(1207) in 16S rRNA + S-adenosyl-L-methionine = N(2)-methylguanosine(1207) in 16S rRNA + S-adenosyl-L-homocysteine + H(+). Functionally, specifically methylates the guanine in position 1207 of 16S rRNA in the 30S particle. The polypeptide is Ribosomal RNA small subunit methyltransferase C (Actinobacillus succinogenes (strain ATCC 55618 / DSM 22257 / CCUG 43843 / 130Z)).